Reading from the N-terminus, the 290-residue chain is CTP-dependent diacylglycerol kinase 1 (290 aa).

The segment at 1–33 (MGTEDAIALPNSTLEPRTEAKQRLSSKSHQVSA) is disordered. Over 1 to 77 (MGTEDAIALP…FITKHEIPRK (77 aa)) the chain is Lumenal. N-linked (GlcNAc...) asparagine glycosylation occurs at Asn11. Positions 23-33 (RLSSKSHQVSA) are enriched in polar residues. A phosphoserine mark is found at Ser44, Ser45, and Ser46. Residues 78 to 95 (VFHSSIGFITLYLYTQGI) traverse the membrane as a helical segment. Over 96 to 103 (NYKNVLWP) the chain is Cytoplasmic. A helical membrane pass occupies residues 104 to 124 (LIYAFIILFILDLIRLNWPFF). The Lumenal segment spans residues 125-140 (NMLYCRTVGALMRKKE). The helical transmembrane segment at 141-161 (IHTYNGVLWYILGLIFSFNFF) threads the bilayer. At 162–163 (SK) the chain is on the cytoplasmic side. Residues 164-184 (DVTLISLFLLSWSDTAAATIG) form a helical membrane-spanning segment. The Lumenal segment spans residues 185–203 (RKYGHLTPKVARNKSLAGS). N-linked (GlcNAc...) asparagine glycosylation is present at Asn197. Residues 204–224 (IAAFTVGVITCWVFYGYFVPA) traverse the membrane as a helical segment. Over 225 to 244 (YSYVNKPGEIQWSPETSRLS) the chain is Cytoplasmic. The chain crosses the membrane as a helical span at residues 245–265 (LNMLSLLGGVVAALSEGIDLF). At 266 to 290 (NWDDNFTIPVLSSLFMNAVIKTFKK) the chain is on the lumenal side. N-linked (GlcNAc...) asparagine glycosylation occurs at Asn270.

Belongs to the DGK1 family. The cofactor is Ca(2+). Mg(2+) serves as cofactor. In terms of processing, CKII-mediated phosphorylation of Ser-45 and Ser-46 regulates its function in the production of PA.

Its subcellular location is the endoplasmic reticulum membrane. It localises to the nucleus membrane. It carries out the reaction a 1,2-diacyl-sn-glycerol + CTP = a 1,2-diacyl-sn-glycero-3-phosphate + CDP + H(+). The enzyme catalyses 1,2-di-(9Z-octadecenoyl)-sn-glycerol + CTP = 1,2-di-(9Z-octadecenoyl)-sn-glycero-3-phosphate + CDP + H(+). Inhibited by N-ethylmaleimide, dCTP, and sphingoid bases including sphinganine, sphingosine and phytosphingosine. DAG pyrophosphate, cardiolipin, CDP-DAG, and lyso-PA inhibited activity by 23-66%. Also inhibited by Ca(2+) concentrations of more than 1 mM, by addition of EDTA or EGTA at 5 mM, and by 5 mM Mn(2+) and Zn(2+). Stimulated by major membrane phospholipids including phosphatidylcholine, phosphatidylethanolamine, phosphatidylinositol, phosphatidylserine, phosphatidylglycerol, and phosphatidate. Also stimulated to a maximum by addition of TritonX-100 at a concentration of 1 mM, followed by an apparent inhibition of activity at concentrations above 1 mM. Its function is as follows. CTP-dependent diacylglycerol kinase that catalyzes the phosphorylation of diacylglycerol (DAG) to phosphatidate (PA). Controls phosphatidate levels at the nuclear envelope. Counteracts the activity of PA phosphatase PAH1/SMP2, controlling the levels of PA and DAG for the synthesis of triacylglycerol and membrane phospholipids. May be involved in vesicle trafficking between the endoplasmic reticulum and the Golgi apparatus. Required to convert triacylglycerol-derived DAG to PA for phospholipid synthesis during growth resumption from stationary phase in the absence of de novo fatty acid synthesis. Involved in the resistance to nickel chloride and nalidixic acid. This Saccharomyces cerevisiae (strain ATCC 204508 / S288c) (Baker's yeast) protein is CTP-dependent diacylglycerol kinase 1 (DGK1).